The sequence spans 257 residues: MVKSHIGGWILLLFVATWSDVGLCKKRPKPGGWNTGGGSRYPGQGSPGGNRYPPQGGGGWGQPHGGGWGQPHGGGWGQPHGGGWGQPHGGGGWGQGGGSHGQWGKPNKPKTNMKHVAGAAAAGAVVGGLGGYMLGSAMSRPLIHFGNDYEDRYYRENMYRYPDQVYYRPVDQYSNQNNFVRDCVNITVKQHTVTTTTKGENFTETDMKIMERVVEQMCVTQYQKESEAYYQRGASAILFSPPPVILLISLLILLIVG.

The N-terminal stretch at 1-24 is a signal peptide; that stretch reads MVKSHIGGWILLLFVATWSDVGLC. The tract at residues 25–234 is interaction with GRB2, ERI3 and SYN1; that stretch reads KKRPKPGGWN…ESEAYYQRGA (210 aa). The segment at 28–110 is disordered; it reads PKPGGWNTGG…GQWGKPNKPK (83 aa). Gly residues-rich tracts occupy residues 33 to 48 and 55 to 101; these read WNTG…GSPG and QGGG…GSHG. 5 consecutive repeat copies span residues 54–62, 63–70, 71–78, 79–86, and 87–95. The segment at 54-95 is 5 X 8 AA tandem repeats of P-H-G-G-G-W-G-Q; it reads PQGGGGWGQPHGGGWGQPHGGGWGQPHGGGWGQPHGGGGWGQ. Cu(2+)-binding residues include His-64, Gly-65, Gly-66, His-72, Gly-73, Gly-74, His-80, Gly-81, Gly-82, His-88, Gly-90, and Gly-91. Cys-183 and Cys-218 are disulfide-bonded. Asn-185 and Asn-201 each carry an N-linked (GlcNAc...) asparagine glycan. Ala-234 carries GPI-anchor amidated alanine lipidation. A propeptide spans 235 to 257 (removed in mature form); the sequence is SAILFSPPPVILLISLLILLIVG.

The protein belongs to the prion family. In terms of assembly, monomer and homodimer. Has a tendency to aggregate into amyloid fibrils containing a cross-beta spine, formed by a steric zipper of superposed beta-strands. Soluble oligomers may represent an intermediate stage on the path to fibril formation. Copper binding may promote oligomerization. Interacts with GRB2, APP, ERI3/PRNPIP and SYN1. Mislocalized cytosolically exposed PrP interacts with MGRN1; this interaction alters MGRN1 subcellular location and causes lysosomal enlargement. Interacts with KIAA1191.

It localises to the cell membrane. The protein localises to the golgi apparatus. Its primary physiological function is unclear. Has cytoprotective activity against internal or environmental stresses. May play a role in neuronal development and synaptic plasticity. May be required for neuronal myelin sheath maintenance. May play a role in iron uptake and iron homeostasis. Soluble oligomers are toxic to cultured neuroblastoma cells and induce apoptosis (in vitro). Association with GPC1 (via its heparan sulfate chains) targets PRNP to lipid rafts. Also provides Cu(2+) or Zn(2+) for the ascorbate-mediated GPC1 deaminase degradation of its heparan sulfate side chains. The chain is Major prion protein from Vulpes lagopus (Arctic fox).